The following is a 338-amino-acid chain: S-adenosylmethionine:tRNA ribosyltransferase-isomerase (338 aa).

This sequence belongs to the QueA family. As to quaternary structure, monomer.

The protein resides in the cytoplasm. The catalysed reaction is 7-aminomethyl-7-carbaguanosine(34) in tRNA + S-adenosyl-L-methionine = epoxyqueuosine(34) in tRNA + adenine + L-methionine + 2 H(+). It participates in tRNA modification; tRNA-queuosine biosynthesis. Its function is as follows. Transfers and isomerizes the ribose moiety from AdoMet to the 7-aminomethyl group of 7-deazaguanine (preQ1-tRNA) to give epoxyqueuosine (oQ-tRNA). The protein is S-adenosylmethionine:tRNA ribosyltransferase-isomerase of Francisella tularensis subsp. mediasiatica (strain FSC147).